The chain runs to 52 residues: UPF0057 membrane protein At1g57550 (52 aa).

The next 2 membrane-spanning stretches (helical) occupy residues 4 to 24 (FLEVLCAIFIPPVGVFLRYGL) and 30 to 50 (VCLLLTLFAFIPGLIYAIYVL).

The protein belongs to the UPF0057 (PMP3) family.

It localises to the membrane. The polypeptide is UPF0057 membrane protein At1g57550 (Arabidopsis thaliana (Mouse-ear cress)).